Consider the following 280-residue polypeptide: MAAKKDYYAILGVPRNATQEEIKRAYKRLARQYHPDVNKSPEAEEKFKEINEAYAVLSDPEKRRIYDTYGTTEAPPPPPPGGYDFSGFDVEDFSEFFQELFGPGLFGGFGRRSRKGRDLRAELPLTLEEAFHGGERVVEVAGRRVSVRIPPGVREGSVIRVPGMGGQGNPPGDLLLVVRLLPHPVFRLEGQDLYATLDVPAPIAVVGGKVRAMTLEGPVEVAVPPRTQAGRKLRLKGKGFPGPAGRGDLYLEVRITIPERLTPEEEALWKKLAEAYYARA.

A J domain is found at 6–70; sequence DYYAILGVPR…EKRRIYDTYG (65 aa).

Belongs to the DnaJ family. Forms a heterononamer with DnaJ and DafA in the resting state. Three copies of each protein are present in the complex.

The protein localises to the cytoplasm. Its function is as follows. Does not influence ATP binding or hydrolysis nor ADP release. Exerts influence on the interaction of DnaK with substrates; in the presence of DafA, DnaJ inhibits substrate binding, and substrate already bound to DnaK is displaced by DnaJ and DafA. The protein is Chaperone protein DnaJ 2 (dnaJ2) of Thermus thermophilus (strain ATCC 27634 / DSM 579 / HB8).